The primary structure comprises 156 residues: MPRKGPVPKREVLPDPVYNSVKVAKLINKVMWDGKKSLAQKICYGAFDIIREKTGRDPLEVFEEALNNVMPVLEVRPRRVGGATYQVPMEVRPERRLSLGIRWIVEYARQRSGKSMMEKLAAEIIDAANNTGGSVKKKEDTHRMAEANKAFAHYRW.

This sequence belongs to the universal ribosomal protein uS7 family. Part of the 30S ribosomal subunit. Contacts proteins S9 and S11.

Its function is as follows. One of the primary rRNA binding proteins, it binds directly to 16S rRNA where it nucleates assembly of the head domain of the 30S subunit. Is located at the subunit interface close to the decoding center, probably blocks exit of the E-site tRNA. This chain is Small ribosomal subunit protein uS7, found in Caldanaerobacter subterraneus subsp. tengcongensis (strain DSM 15242 / JCM 11007 / NBRC 100824 / MB4) (Thermoanaerobacter tengcongensis).